A 119-amino-acid chain; its full sequence is Holo-[acyl-carrier-protein] synthase (119 aa).

Mg(2+)-binding residues include Asp8 and Glu58.

Belongs to the P-Pant transferase superfamily. AcpS family. It depends on Mg(2+) as a cofactor.

The protein localises to the cytoplasm. The enzyme catalyses apo-[ACP] + CoA = holo-[ACP] + adenosine 3',5'-bisphosphate + H(+). In terms of biological role, transfers the 4'-phosphopantetheine moiety from coenzyme A to a Ser of acyl-carrier-protein. This chain is Holo-[acyl-carrier-protein] synthase, found in Bacillus mycoides (strain KBAB4) (Bacillus weihenstephanensis).